Reading from the N-terminus, the 335-residue chain is Luciferase-like monooxygenase (335 aa).

To bacterial alkanal monooxygenase alpha and beta chains.

The chain is Luciferase-like monooxygenase (yhbW) from Escherichia coli O6:H1 (strain CFT073 / ATCC 700928 / UPEC).